We begin with the raw amino-acid sequence, 370 residues long: MNPVQQPAQHKCPASSLNPPHPKRAQEAPDMGLYCDNFMYQQHNLHPSHRATNFSIGDFTHQANPYLWLGGPGVNNSPSYSPTPAPYIPPAFSAPQRQFLANSAAFGGADLGWMSAASQEELLKRVRPPYSYSALIAMSIQNATDKRLTLSQIYQYVAENFPFYKKSKAGWQNSIRHNLSLNDCFKKMPRDENDPGKGNYWTLDSNCEKMFDNGNFRRKRKPKSETNNIKIAKREEDHVSPKGKESPPMITPSSPKELSPTGHSKCPSPPTVTYTPCLTNFIGSMTAVDSATMNRQGPLGLLNELSQRNLNGLSSFISGSAVDQSPEHQDSSLFYNRSPYYSSLPTSNQKQPPYLQQLHPQQSPLYQGRY.

3 disordered regions span residues 1–28, 212–269, and 342–370; these read MNPV…AQEA, DNGN…CPSP, and SSLP…QGRY. The segment at residues 127-221 is a DNA-binding region (fork-head); the sequence is RPPYSYSALI…DNGNFRRKRK (95 aa). The segment covering 232-245 has biased composition (basic and acidic residues); that stretch reads AKREEDHVSPKGKE. Over residues 349–370 the composition is skewed to low complexity; the sequence is QKQPPYLQQLHPQQSPLYQGRY.

Initially localized to the animal hemisphere (the presumptive ectoderm) of early-mid blastula embryos. Becomes restricted to head placodes, excluding the otic placodes, by the tailbud stages.

The protein resides in the nucleus. Transcription factor. Essential for ventral specification of the early cephalic (head) ectoderm during gastrulation, playing a role in the non-neural versus neural cell fate choice. Binds to DNA via the target sequence 5'-[AG]TAAA[CT]A-3', with 5'-ATAAACA-3' being the preferred binding site. This chain is Forkhead box protein I1-A (foxi1-a), found in Xenopus laevis (African clawed frog).